The chain runs to 216 residues: Octanoyltransferase (216 aa).

The 189-residue stretch at 24–212 (KFRKECILFL…NLCSFLEPIN (189 aa)) folds into the BPL/LPL catalytic domain. Residues 69 to 76 (RGGDFTAH), 140 to 142 (SIG), and 153 to 155 (GIA) each bind substrate. Cys-171 serves as the catalytic Acyl-thioester intermediate.

This sequence belongs to the LipB family.

It is found in the cytoplasm. It catalyses the reaction octanoyl-[ACP] + L-lysyl-[protein] = N(6)-octanoyl-L-lysyl-[protein] + holo-[ACP] + H(+). It functions in the pathway protein modification; protein lipoylation via endogenous pathway; protein N(6)-(lipoyl)lysine from octanoyl-[acyl-carrier-protein]: step 1/2. Its function is as follows. Catalyzes the transfer of endogenously produced octanoic acid from octanoyl-acyl-carrier-protein onto the lipoyl domains of lipoate-dependent enzymes. Lipoyl-ACP can also act as a substrate although octanoyl-ACP is likely to be the physiological substrate. The sequence is that of Octanoyltransferase from Leptospira interrogans serogroup Icterohaemorrhagiae serovar copenhageni (strain Fiocruz L1-130).